The sequence spans 279 residues: Oxygen-dependent coproporphyrinogen-III oxidase (279 aa).

Residue Ser-102 coordinates substrate. Residues His-106 and His-116 each coordinate a divalent metal cation. Residue His-116 is the Proton donor of the active site. Residue 118-120 participates in substrate binding; it reads NTR. A divalent metal cation contacts are provided by His-149 and His-179. The important for dimerization stretch occupies residues 244 to 279; that stretch reads YVEFNLLYDRGTKFGLMTDGNVEAILMSLPPEVKFN.

It belongs to the aerobic coproporphyrinogen-III oxidase family. Homodimer. It depends on a divalent metal cation as a cofactor.

It is found in the cytoplasm. It carries out the reaction coproporphyrinogen III + O2 + 2 H(+) = protoporphyrinogen IX + 2 CO2 + 2 H2O. It participates in porphyrin-containing compound metabolism; protoporphyrin-IX biosynthesis; protoporphyrinogen-IX from coproporphyrinogen-III (O2 route): step 1/1. Involved in the heme biosynthesis. Catalyzes the aerobic oxidative decarboxylation of propionate groups of rings A and B of coproporphyrinogen-III to yield the vinyl groups in protoporphyrinogen-IX. This chain is Oxygen-dependent coproporphyrinogen-III oxidase, found in Rickettsia conorii (strain ATCC VR-613 / Malish 7).